Consider the following 478-residue polypeptide: Patatin-like phospholipase domain-containing protein 2 (478 aa).

The Cytoplasmic segment spans residues 1–8 (MFPRETKW). A helical transmembrane segment spans residues 9-29 (NISFAGCGFLGVYHIGVASCL). Residues 10-179 (ISFAGCGFLG…SDNLPLYELK (170 aa)) form the PNPLA domain. A GXGXXG motif is present at residues 14–19 (GCGFLG). Topologically, residues 30–42 (REHAPFLVANATH) are extracellular. Residue Asn-39 is glycosylated (N-linked (GlcNAc...) asparagine). Residues 43 to 63 (IYGASAGALTATALVTGACLG) form a helical membrane-spanning segment. Residues 45–49 (GASAG) carry the GXSXG motif. Catalysis depends on Ser-47, which acts as the Nucleophile. Topologically, residues 64–137 (EAGANIIEVS…IISHFSSKDE (74 aa)) are cytoplasmic. Lys-92 participates in a covalent cross-link: Glycyl lysine isopeptide (Lys-Gly) (interchain with G-Cter in ubiquitin). The chain crosses the membrane as a helical span at residues 138-158 (LIQANVCSTFIPVYCGLIPPT). Over 159 to 323 (LQGVRYVDGG…TTLSNMLPVR (165 aa)) the chain is Extracellular. Asp-166 serves as the catalytic Proton acceptor. A DGA/G motif is present at residues 166–168 (DGG). Residues 324-344 (LATAMMVPYTLPLESAVSFTI) traverse the membrane as a helical segment. Residues 345-478 (RLLEWLPDVP…PQDPSGLPPC (134 aa)) lie on the Cytoplasmic side of the membrane. Ser-366 is modified (phosphoserine; in vitro). The residue at position 388 (Ser-388) is a Phosphoserine; by PKA. Ser-398 and Ser-422 each carry phosphoserine. The interval 456–478 (RAPASPTATDPATPQDPSGLPPC) is disordered. Residues 457–478 (APASPTATDPATPQDPSGLPPC) are compositionally biased toward low complexity. Position 460 is a phosphoserine; in vitro (Ser-460).

As to quaternary structure, interacts with ABHD5; this association stimulates PNPLA2 triglyceride hydrolase activity. Interacts with SERPINF1; this interaction stimulates the phospholipase A2 activity of PNPLA2. Despite a colocalization in lipid droplets, it probably does not interact with PLIN. Interacts with PLIN5; prevents interaction with ABHD5. Interacts with FAF2. In terms of processing, phosphorylation at Ser-398 by PKA is increased during fasting and moderate intensity exercise, and moderately increases lipolytic activity. Ubiquitinated by PEX2 in response to reactive oxygen species (ROS), leading to its degradation. Ubiquitination is stimulated by LDAH.

The protein localises to the lipid droplet. Its subcellular location is the cell membrane. It is found in the cytoplasm. It carries out the reaction a triacylglycerol + H2O = a diacylglycerol + a fatty acid + H(+). It catalyses the reaction a triacylglycerol + H2O = a 1,2-diacylglycerol + a fatty acid + H(+). The enzyme catalyses a triacylglycerol + H2O = a 1,3-diacylglycerol + a fatty acid + H(+). The catalysed reaction is a triacyl-sn-glycerol + H2O = a 1,3-diacyl-sn-glycerol + a fatty acid + H(+). It carries out the reaction a triacyl-sn-glycerol + H2O = a 2,3-diacyl-sn-glycerol + a fatty acid + H(+). It catalyses the reaction a 1-acylglycerol + a 1,3-diacylglycerol = a triacylglycerol + glycerol. The enzyme catalyses a 1-acylglycerol + a 1,2-diacylglycerol = a triacylglycerol + glycerol. The catalysed reaction is 2 a 1-acylglycerol = a 1,2-diacylglycerol + glycerol. It carries out the reaction a triacylglycerol + all-trans-retinol = an all-trans-retinyl ester + a diacylglycerol. It catalyses the reaction 1,2-di-(9Z-octadecenoyl)-glycerol + (9Z)-octadecenoate + H(+) = 1,2,3-tri-(9Z-octadecenoyl)-glycerol + H2O. The enzyme catalyses 1,2,3-tri-(9Z-octadecenoyl)-glycerol + H2O = 1,3-di-(9Z-octadecenoyl)-glycerol + (9Z)-octadecenoate + H(+). The catalysed reaction is 1-(9Z-octadecenoyl)-glycerol + 1,3-di-(9Z-octadecenoyl)-glycerol = 1,2,3-tri-(9Z-octadecenoyl)-glycerol + glycerol. It carries out the reaction 1-(9Z-octadecenoyl)-glycerol + 1,2-di-(9Z-octadecenoyl)-glycerol = 1,2,3-tri-(9Z-octadecenoyl)-glycerol + glycerol. It catalyses the reaction 2 1-(9Z-octadecenoyl)-glycerol = 1,2-di-(9Z-octadecenoyl)-glycerol + glycerol. The enzyme catalyses 1,2,3-tri-(9Z-octadecenoyl)-glycerol + all-trans-retinol = all-trans-retinyl 9Z-octadecenoate + di-(9Z)-octadecenoylglycerol. The catalysed reaction is 1,2,3-tri-(9Z)-hexadecenoylglycerol + H2O = 1,3-di-(9Z)-hexadecenoylglycerol + (9Z)-hexadecenoate + H(+). It carries out the reaction 1,2,3-tri-(9Z,12Z)-octadecadienoylglycerol + H2O = 1,3-di-(9Z,12Z)-octadecadienoylglycerol + (9Z,12Z)-octadecadienoate + H(+). It catalyses the reaction 1,2,3-tri-(9Z,12Z,15Z)-octadecatrienoylglycerol + H2O = 1,3-di-(9Z,12Z,15Z)-octadecatrienoylglycerol + (9Z,12Z,15Z)-octadecatrienoate + H(+). The enzyme catalyses 1,3-di-(9Z)-octadecenoyl-2-hexadecanoylglycerol + H2O = 1,3-di-(9Z-octadecenoyl)-glycerol + hexadecanoate + H(+). The catalysed reaction is 1,2-di-(9Z)-octadecenoyl-3-hexadecanoyl-sn-glycerol + H2O = 1-(9Z)-octadecenoyl-3-hexadecanoyl-sn-glycerol + (9Z)-octadecenoate + H(+). It carries out the reaction 1-hexadecanoyl-2,3-di-(9Z)-octadecenoyl-sn-glycerol + H2O = 1-hexadecanoyl-3-(9Z)-octadecenoyl-sn-glycerol + (9Z)-octadecenoate + H(+). It catalyses the reaction 1,2,3-tri-(9Z-octadecenoyl)-glycerol + H2O = 2,3-di-(9Z)-octadecenoyl-sn-glycerol + (9Z)-octadecenoate + H(+). The enzyme catalyses 1,2,3-tri-(9Z)-hexadecenoylglycerol + H2O = 2,3-di-(9Z)-hexadecenoyl-sn-glycerol + (9Z)-hexadecenoate + H(+). The catalysed reaction is 1,2,3-tri-(9Z,12Z)-octadecadienoylglycerol + H2O = 2,3-di-(9Z,12Z)-octadecadienoyl-sn-glycerol + (9Z,12Z)-octadecadienoate + H(+). It carries out the reaction 1,2,3-tri-(9Z,12Z,15Z)-octadecatrienoylglycerol + H2O = 2,3-di-(9Z,12Z,15Z)-octadecatrienoyl-sn-glycerol + (9Z,12Z,15Z)-octadecatrienoate + H(+). It catalyses the reaction 1,3-di-(9Z)-octadecenoyl-2-hexadecanoylglycerol + H2O = 2-hexadecanoyl-3-(9Z)-octadecenoyl-sn-glycerol + (9Z)-octadecenoate + H(+). The enzyme catalyses 1-hexadecanoyl-2,3-di-(9Z)-octadecenoyl-sn-glycerol + H2O = 2,3-di-(9Z)-octadecenoyl-sn-glycerol + hexadecanoate + H(+). The catalysed reaction is 1,2-di-(9Z)-octadecenoyl-3-hexadecanoyl-sn-glycerol + H2O = 2-(9Z-octadecenoyl)-3-hexadecanoyl-sn-glycerol + (9Z)-octadecenoate + H(+). It carries out the reaction a 1,2-diacyl-sn-glycero-3-phosphocholine + H2O = a 1-acyl-sn-glycero-3-phosphocholine + a fatty acid + H(+). It catalyses the reaction 1,2,3-tri-(9Z-octadecenoyl)-glycerol + 9-hydroxy-octadecanoate = 9-(9Z-octadecenoyloxy)-octadecanoate + 2,3-di-(9Z)-octadecenoyl-sn-glycerol. The enzyme catalyses 1-hexadecanoyl-2,3-di-(9Z)-octadecenoyl-sn-glycerol + 9-hydroxy-octadecanoate = 9-hexadecanoyloxy-octadecanoate + 2,3-di-(9Z)-octadecenoyl-sn-glycerol. The catalysed reaction is 1,2,3-tri-(10Z)-heptadecenoylglycerol + 9-hydroxy-octadecanoate = 2,3-di-(10Z-heptadecenoyl)-sn-glycerol + 9-(10Z-heptadecenoyloxy)-octadecanoate. It carries out the reaction 1,2,3-tri-(9Z,12Z)-octadecadienoylglycerol + 9-hydroxy-octadecanoate = 2,3-di-(9Z,12Z)-octadecadienoyl-sn-glycerol + 9-(9Z,12Z-octadecadienoyloxy)-octadecanoate. It catalyses the reaction 1,2,3-tri-(9Z)-hexadecenoylglycerol + 9-hydroxy-octadecanoate = 2,3-di-(9Z)-hexadecenoyl-sn-glycerol + 9-(9Z-hexadecenoyloxy)-octadecanoate. The enzyme catalyses 9-hydroxy-octadecanoate + 1,2-di-(9Z-octadecenoyl)-sn-glycerol = 9-(9Z-octadecenoyloxy)-octadecanoate + 2-(9Z-octadecenoyl)-glycerol. The catalysed reaction is 1-hexadecanoyl-2,3-di-(9Z)-octadecenoyl-sn-glycerol + 9-hydroxy-octadecanoate = 1-hexadecanoyl-3-(9Z)-octadecenoyl-sn-glycerol + 9-(9Z-octadecenoyloxy)-octadecanoate. Its pathway is glycerolipid metabolism; triacylglycerol degradation. In terms of biological role, catalyzes the initial step in triglyceride hydrolysis in adipocyte and non-adipocyte lipid droplets. Exhibits a strong preference for the hydrolysis of long-chain fatty acid esters at the sn-2 position of the glycerol backbone and acts coordinately with LIPE/HLS and DGAT2 within the lipolytic cascade. Also possesses acylglycerol transacylase and phospholipase A2 activities. Transfers fatty acid from triglyceride to retinol, hydrolyzes retinylesters, and generates 1,3-diacylglycerol from triglycerides. Regulates adiposome size and may be involved in the degradation of adiposomes. Catalyzes the formation of an ester bond between hydroxy fatty acids and fatty acids derived from triglycerides or diglycerides to generate fatty acid esters of hydroxy fatty acids (FAHFAs) in adipocytes. Acts antagonistically with LDAH in regulation of cellular lipid stores. Inhibits LDAH-stimulated lipid droplet fusion. May play an important role in energy homeostasis. May play a role in the response of the organism to starvation, enhancing hydrolysis of triglycerides and providing free fatty acids to other tissues to be oxidized in situations of energy depletion. This Rattus norvegicus (Rat) protein is Patatin-like phospholipase domain-containing protein 2.